The sequence spans 306 residues: Apolipoprotein E (306 aa).

A signal peptide spans M1–A18. Tandem repeats lie at residues V81–G102, P103–G124, A125–G146, Q147–L168, R169–E190, R191–A212, Q213–R230, and G231–E252. The segment at V81–E252 is 8 X 22 AA approximate tandem repeats. The residue at position 144 (M144) is a Methionine sulfoxide. S148 bears the Phosphoserine mark. The LDL and other lipoprotein receptors binding stretch occupies residues H159–R169. L163–R166 lines the heparin pocket. The lipid-binding and lipoprotein association stretch occupies residues A211 to M280. G226 to L233 lines the heparin pocket. The tract at residues R268–M280 is specificity for association with VLDL.

This sequence belongs to the apolipoprotein A1/A4/E family. In terms of assembly, homotetramer. May interact with ABCA1; functionally associated with ABCA1 in the biogenesis of HDLs. May interact with APP/A4 amyloid-beta peptide; the interaction is extremely stable in vitro but its physiological significance is unclear. May interact with MAPT. May interact with MAP2. In the cerebrospinal fluid, interacts with secreted SORL1. Interacts with PMEL; this allows the loading of PMEL luminal fragment on ILVs to induce fibril nucleation. In terms of processing, APOE exists as multiple glycosylated and sialylated glycoforms within cells and in plasma. The extent of glycosylation and sialylation are tissue and context specific. Post-translationally, glycated in plasma VLDL. Phosphorylated by FAM20C in the extracellular medium.

Its subcellular location is the secreted. The protein localises to the extracellular space. It is found in the extracellular matrix. The protein resides in the extracellular vesicle. It localises to the endosome. Its subcellular location is the multivesicular body. Functionally, APOE is an apolipoprotein, a protein associating with lipid particles, that mainly functions in lipoprotein-mediated lipid transport between organs via the plasma and interstitial fluids. APOE is a core component of plasma lipoproteins and is involved in their production, conversion and clearance. Apolipoproteins are amphipathic molecules that interact both with lipids of the lipoprotein particle core and the aqueous environment of the plasma. As such, APOE associates with chylomicrons, chylomicron remnants, very low density lipoproteins (VLDL) and intermediate density lipoproteins (IDL) but shows a preferential binding to high-density lipoproteins (HDL). It also binds a wide range of cellular receptors including the LDL receptor/LDLR, the LDL receptor-related proteins LRP1, LRP2 and LRP8 and the very low-density lipoprotein receptor/VLDLR that mediate the cellular uptake of the APOE-containing lipoprotein particles. Finally, APOE also has a heparin-binding activity and binds heparan-sulfate proteoglycans on the surface of cells, a property that supports the capture and the receptor-mediated uptake of APOE-containing lipoproteins by cells. A main function of APOE is to mediate lipoprotein clearance through the uptake of chylomicrons, VLDLs, and HDLs by hepatocytes. APOE is also involved in the biosynthesis by the liver of VLDLs as well as their uptake by peripheral tissues ensuring the delivery of triglycerides and energy storage in muscle, heart and adipose tissues. By participating in the lipoprotein-mediated distribution of lipids among tissues, APOE plays a critical role in plasma and tissues lipid homeostasis. APOE is also involved in two steps of reverse cholesterol transport, the HDLs-mediated transport of cholesterol from peripheral tissues to the liver, and thereby plays an important role in cholesterol homeostasis. First, it is functionally associated with ABCA1 in the biogenesis of HDLs in tissues. Second, it is enriched in circulating HDLs and mediates their uptake by hepatocytes. APOE also plays an important role in lipid transport in the central nervous system, regulating neuron survival and sprouting. The chain is Apolipoprotein E (APOE) from Hystrix brachyura (Malayan porcupine).